Consider the following 1465-residue polypeptide: DNA polymerase III PolC-type (1465 aa).

Residues 427–583 form the Exonuclease domain; the sequence is YVVFDVETTG…YDAEATGRLL (157 aa).

The protein belongs to the DNA polymerase type-C family. PolC subfamily.

It is found in the cytoplasm. It catalyses the reaction DNA(n) + a 2'-deoxyribonucleoside 5'-triphosphate = DNA(n+1) + diphosphate. Functionally, required for replicative DNA synthesis. This DNA polymerase also exhibits 3' to 5' exonuclease activity. This chain is DNA polymerase III PolC-type, found in Streptococcus pyogenes serotype M1.